The following is a 396-amino-acid chain: Na(+)/H(+) antiporter NhaA (396 aa).

11 consecutive transmembrane segments (helical) span residues 14–34, 59–79, 95–115, 124–144, 154–174, 178–198, 205–225, 254–274, 278–298, 328–348, and 363–383; these read ASGI…NSGL, LLLW…GLEV, TFPA…YTFF, AGWA…MALL, VFLL…IALF, QLSL…LWMN, IGLY…SGVH, ALHP…NAGV, GIGL…GLFV, IFAV…IASL, and LGIL…LRMS.

The protein belongs to the NhaA Na(+)/H(+) (TC 2.A.33) antiporter family.

It localises to the cell inner membrane. It carries out the reaction Na(+)(in) + 2 H(+)(out) = Na(+)(out) + 2 H(+)(in). In terms of biological role, na(+)/H(+) antiporter that extrudes sodium in exchange for external protons. The polypeptide is Na(+)/H(+) antiporter NhaA (Aeromonas salmonicida (strain A449)).